We begin with the raw amino-acid sequence, 598 residues long: Dihydroxy-acid dehydratase, mitochondrial (598 aa).

The N-terminal 18 residues, M1–A18, are a transit peptide targeting the mitochondrion. C84 provides a ligand contact to [2Fe-2S] cluster. D116 is a Mg(2+) binding site. C157 contributes to the [2Fe-2S] cluster binding site. D158 lines the Mg(2+) pocket. A [2Fe-2S] cluster-binding site is contributed by C232. Residue E485 coordinates Mg(2+). The active-site Proton acceptor is S511.

This sequence belongs to the IlvD/Edd family. The cofactor is [2Fe-2S] cluster. It depends on Mg(2+) as a cofactor.

The protein localises to the mitochondrion. It catalyses the reaction (2R)-2,3-dihydroxy-3-methylbutanoate = 3-methyl-2-oxobutanoate + H2O. It carries out the reaction (2R,3R)-2,3-dihydroxy-3-methylpentanoate = (S)-3-methyl-2-oxopentanoate + H2O. Its pathway is amino-acid biosynthesis; L-isoleucine biosynthesis; L-isoleucine from 2-oxobutanoate: step 3/4. The protein operates within amino-acid biosynthesis; L-valine biosynthesis; L-valine from pyruvate: step 3/4. Its function is as follows. Dihydroxyacid dehydratase that catalyzes the third step in the common pathway leading to biosynthesis of branched-chain amino acids. Catalyzes the dehydration of (2R,3R)-2,3-dihydroxy-3-methylpentanoate (2,3-dihydroxy-3-methylvalerate) into 2-oxo-3-methylpentanoate (2-oxo-3-methylvalerate) and of (2R)-2,3-dihydroxy-3-methylbutanoate (2,3-dihydroxyisovalerate) into 2-oxo-3-methylbutanoate (2-oxoisovalerate), the penultimate precursor to L-isoleucine and L-valine, respectively. This chain is Dihydroxy-acid dehydratase, mitochondrial, found in Schizosaccharomyces pombe (strain 972 / ATCC 24843) (Fission yeast).